The following is a 1198-amino-acid chain: MAKADTLPVFLKSITIQGFKSFADKVKLELGQGLSVVVGPNGSGKSNVADAIRWVLGEQSAKNLRGSKMEDVIFSGSSVRRPVGMAEVSLFFDNSTGIFPLEYQEVIITRRVYRDGEGQYFINRSSCRLKDIHELFMDTGAGKEGFSIIGQGRVEEILNLRSEERRTLIEEASGITKYRMRKREALKRLDETEHNLERIRDILAEIEGQLGPLEEQATIAREAVELTTEQKALEIEIVAFDLKEVRHKLTTSVQETEELQSAIAAAVADLSQKESEILGNKVKLNLLDEQIQKQQETTYQLDQAVNQIVQELRLRQEREGYLGEQINRVTTELSSHEEKVRQSTEQLRALEDRKALLHKTLEQANQALAADEQRLAEAKARNGLEEIEILRGSLSHLQSKLAESTAELNRFTHQLATLNSTHEQLVKEKKDKEAALFSHEQQEAQVQEQLKAQEELQTDIRLQTERAHQETAQLREQSKAGQRELQELNRDLEKKSARYHALKNLEDSLEGYQRGVRELMLAKKKNQPSCGDLCGTLADLLQVEERYEVAVEVALGAGIQNIVTETERGAKEAVHYLKSHNLGRATFLPLDVIQGGKATVAKEAAQDPGFIGVAVDLITFAEKYRKAFESQLGRTLIVTDMEAATRVARASGYRARIVTLEGDQVHPGGSLTGGSLQRKGSNLLGRSREIQELRQECDERRTQQKEMELKAGALGTQIQKGEENLKHLMGEEQELKSALAVLRTQELNLRAQAQRIHEEVTAIAARMAGIEQERDELQSHKALGAEEQSKLTDSIQEAQEALARQEEKNRQASREMEQLQERLTQTKVQAAKWEQELKQAVERLAQDQALLGENKHLLERKRKDLQDLEESKARLAFEQGDWESRRREAGEQQQQAQEVLIALRKEREVLSKELMDQESLAQKKRQEQQTLEQKLHNLELKTARWDAEWETGSRRLLEEFDLTWDEAQTYQSERNRAELGARVQEIKLRMELLGPVNQAAIEEYPKLQERYDFLSVQKQDLEEANESLQQLIAELDKTMSERFEEGFIAVNEAFKVVFKELFNGGYAELRLVDPTNLLDTGVEIIAQPPGKKPQLLSLLSGGERALTAIGLLFALLKVKPSPFCVLDEIEASLDDANVSRFAQYIHRLSDSTQFLVISHRKGTMEAADVLYGITMEESGVSKLLSVQLEGQDKDTRTA.

Residue 40–47 (PNGSGKSN) coordinates ATP. Coiled coils occupy residues 175 to 211 (ITKY…GQLG) and 322 to 524 (LGEQ…LAKK). The 114-residue stretch at 534–647 (CGTLADLLQV…VTDMEAATRV (114 aa)) folds into the SMC hinge domain. Positions 687–1042 (SREIQELRQE…AELDKTMSER (356 aa)) form a coiled coil. The interval 785–818 (AEEQSKLTDSIQEAQEALARQEEKNRQASREMEQ) is disordered. Positions 803-818 (ARQEEKNRQASREMEQ) are enriched in basic and acidic residues.

The protein belongs to the SMC family. Homodimer.

The protein resides in the cytoplasm. Functionally, required for chromosome condensation and partitioning. The polypeptide is Chromosome partition protein Smc (Desulfitobacterium hafniense (strain Y51)).